Consider the following 125-residue polypeptide: Small ribosomal subunit protein bS6 (125 aa).

It belongs to the bacterial ribosomal protein bS6 family.

Functionally, binds together with bS18 to 16S ribosomal RNA. The chain is Small ribosomal subunit protein bS6 (rpsF) from Pasteurella multocida (strain Pm70).